Here is a 152-residue protein sequence, read N- to C-terminus: Homeobox protein ceh-63 (152 aa).

Positions 21 to 30 (NDTNSSQQIK) are enriched in polar residues. 2 disordered regions span residues 21–48 (NDTNSSQQIKNIKPPPKRSNRPTKRTTF) and 92–126 (RRTKKRRCTSPLRKSMMKKSDERSPSPQNPSSQHV). Positions 35–44 (PPKRSNRPTK) are enriched in basic residues. Positions 41-100 (RPTKRTTFTSEQVTLLELEFAKNEYICKDRRGELAQTIELTECQVKTWFQNRRTKKRRCT) form a DNA-binding region, homeobox. The segment covering 116–126 (PSPQNPSSQHV) has biased composition (polar residues).

As to quaternary structure, may interact with homeobox protein ceh-14.

It is found in the nucleus. Its function is as follows. Probable transcription factor, modulating expression of helix-loop-helix protein mbr-1, perhaps acting in concert with homeobox protein ceh-14. May play a minor role in axon guidance in the DVC interneuron. This Caenorhabditis elegans protein is Homeobox protein ceh-63.